Consider the following 205-residue polypeptide: Thiamine-phosphate synthase (205 aa).

Residues 35 to 39 (QYRDK) and N67 each bind 4-amino-2-methyl-5-(diphosphooxymethyl)pyrimidine. Mg(2+) contacts are provided by D68 and D86. T105 is a 4-amino-2-methyl-5-(diphosphooxymethyl)pyrimidine binding site. Residue 132 to 134 (SLT) coordinates 2-[(2R,5Z)-2-carboxy-4-methylthiazol-5(2H)-ylidene]ethyl phosphate. Position 135 (K135) interacts with 4-amino-2-methyl-5-(diphosphooxymethyl)pyrimidine. A 2-[(2R,5Z)-2-carboxy-4-methylthiazol-5(2H)-ylidene]ethyl phosphate-binding site is contributed by G162.

Belongs to the thiamine-phosphate synthase family. It depends on Mg(2+) as a cofactor.

The catalysed reaction is 2-[(2R,5Z)-2-carboxy-4-methylthiazol-5(2H)-ylidene]ethyl phosphate + 4-amino-2-methyl-5-(diphosphooxymethyl)pyrimidine + 2 H(+) = thiamine phosphate + CO2 + diphosphate. It carries out the reaction 2-(2-carboxy-4-methylthiazol-5-yl)ethyl phosphate + 4-amino-2-methyl-5-(diphosphooxymethyl)pyrimidine + 2 H(+) = thiamine phosphate + CO2 + diphosphate. The enzyme catalyses 4-methyl-5-(2-phosphooxyethyl)-thiazole + 4-amino-2-methyl-5-(diphosphooxymethyl)pyrimidine + H(+) = thiamine phosphate + diphosphate. The protein operates within cofactor biosynthesis; thiamine diphosphate biosynthesis; thiamine phosphate from 4-amino-2-methyl-5-diphosphomethylpyrimidine and 4-methyl-5-(2-phosphoethyl)-thiazole: step 1/1. Condenses 4-methyl-5-(beta-hydroxyethyl)thiazole monophosphate (THZ-P) and 2-methyl-4-amino-5-hydroxymethyl pyrimidine pyrophosphate (HMP-PP) to form thiamine monophosphate (TMP). The sequence is that of Thiamine-phosphate synthase from Pseudomonas savastanoi pv. phaseolicola (strain 1448A / Race 6) (Pseudomonas syringae pv. phaseolicola (strain 1448A / Race 6)).